The chain runs to 510 residues: MSKKPVALIILDGFALRDEDKGNAVTHAKKPNFDRFWNEYPHATLQASGEAVGLPEGQMGNSEVGHLNIGAGRIVYQSLTRVNVAIREGEFEQNETLLAAVKHAKEKGTNLHLFGLLSDGGVHSHIEHLYALLRLAKSEGLEKVYIHGFLDGRDVAPQSAETYLKELNEKIEEYGVGEIATLSGRYYSMDRDKRWERVEKSYRAMVYGEGPSYTSAEECVKDSYDNGIYDEFVLPSVITKEDGSPVATIQDEDAVIFYNFRPDRAIQISNTFANEDFRSFDRGEKHPKHLHFVCLTHFSETVDGYVAFKPINLDNTLGEVLSQNNLKQLRIAETEKYPHVTFFMSGGREAEFPGETRILIDSPKVATYDLKPEMSAYEVTDALLAEIEGDKQDAILLNFANPDMVGHSGMLEPTVKAIETVDECLGKIVDAILAKGGTAIITADHGNADEVITLEGNPMTAHTTNPVPVIVTKQGLELREDGILGDLAPTMLTLLDVAQPKEMTGKTLIK.

Mn(2+) is bound by residues Asp-12 and Ser-62. Ser-62 serves as the catalytic Phosphoserine intermediate. Residues His-123, 153–154, Arg-185, Arg-191, 261–264, and Lys-336 each bind substrate; these read RD and RPDR. Positions 403, 407, 444, 445, and 462 each coordinate Mn(2+).

It belongs to the BPG-independent phosphoglycerate mutase family. In terms of assembly, monomer. The cofactor is Mn(2+).

It carries out the reaction (2R)-2-phosphoglycerate = (2R)-3-phosphoglycerate. Its pathway is carbohydrate degradation; glycolysis; pyruvate from D-glyceraldehyde 3-phosphate: step 3/5. Its function is as follows. Essential for rapid growth and for sporulation. Catalyzes the interconversion of 2-phosphoglycerate and 3-phosphoglycerate. This chain is 2,3-bisphosphoglycerate-independent phosphoglycerate mutase, found in Priestia megaterium (strain ATCC 12872 / QMB1551) (Bacillus megaterium).